A 230-amino-acid chain; its full sequence is 7-cyano-7-deazaguanine synthase (230 aa).

ATP is bound at residue leucine 9–alanine 19. The Zn(2+) site is built by cysteine 190, cysteine 198, cysteine 201, and cysteine 204.

This sequence belongs to the QueC family. The cofactor is Zn(2+).

It catalyses the reaction 7-carboxy-7-deazaguanine + NH4(+) + ATP = 7-cyano-7-deazaguanine + ADP + phosphate + H2O + H(+). Its pathway is purine metabolism; 7-cyano-7-deazaguanine biosynthesis. Functionally, catalyzes the ATP-dependent conversion of 7-carboxy-7-deazaguanine (CDG) to 7-cyano-7-deazaguanine (preQ(0)). In Microcystis aeruginosa (strain NIES-843 / IAM M-2473), this protein is 7-cyano-7-deazaguanine synthase.